The primary structure comprises 432 residues: 3-phosphoshikimate 1-carboxyvinyltransferase (432 aa).

3-phosphoshikimate contacts are provided by Lys21, Ser22, and Arg26. Lys21 lines the phosphoenolpyruvate pocket. Residues Gly93 and Arg121 each contribute to the phosphoenolpyruvate site. Residues Ser166, Gln168, Asp318, and Lys345 each contribute to the 3-phosphoshikimate site. Residue Gln168 coordinates phosphoenolpyruvate. The active-site Proton acceptor is Asp318. Arg349 and Arg391 together coordinate phosphoenolpyruvate.

It belongs to the EPSP synthase family. Monomer.

Its subcellular location is the cytoplasm. The enzyme catalyses 3-phosphoshikimate + phosphoenolpyruvate = 5-O-(1-carboxyvinyl)-3-phosphoshikimate + phosphate. It functions in the pathway metabolic intermediate biosynthesis; chorismate biosynthesis; chorismate from D-erythrose 4-phosphate and phosphoenolpyruvate: step 6/7. Its function is as follows. Catalyzes the transfer of the enolpyruvyl moiety of phosphoenolpyruvate (PEP) to the 5-hydroxyl of shikimate-3-phosphate (S3P) to produce enolpyruvyl shikimate-3-phosphate and inorganic phosphate. The polypeptide is 3-phosphoshikimate 1-carboxyvinyltransferase (Persephonella marina (strain DSM 14350 / EX-H1)).